The following is a 312-amino-acid chain: Glycerol-3-phosphate dehydrogenase [NAD(P)+] (312 aa).

The NADPH site is built by W11, R30, R31, and K95. Sn-glycerol 3-phosphate contacts are provided by K95, G123, and S125. A127 provides a ligand contact to NADPH. 5 residues coordinate sn-glycerol 3-phosphate: K177, D230, S240, R241, and N242. K177 acts as the Proton acceptor in catalysis. Residue R241 coordinates NADPH. Residues V265 and E267 each coordinate NADPH.

The protein belongs to the NAD-dependent glycerol-3-phosphate dehydrogenase family.

Its subcellular location is the cytoplasm. The enzyme catalyses sn-glycerol 3-phosphate + NAD(+) = dihydroxyacetone phosphate + NADH + H(+). It carries out the reaction sn-glycerol 3-phosphate + NADP(+) = dihydroxyacetone phosphate + NADPH + H(+). It functions in the pathway membrane lipid metabolism; glycerophospholipid metabolism. Catalyzes the reduction of the glycolytic intermediate dihydroxyacetone phosphate (DHAP) to sn-glycerol 3-phosphate (G3P), the key precursor for phospholipid synthesis. This Helicobacter pylori (strain Shi470) protein is Glycerol-3-phosphate dehydrogenase [NAD(P)+].